Consider the following 331-residue polypeptide: Cytoplasmic envelopment protein 1 (331 aa).

Belongs to the herpesviridae cytoplasmic envelopment protein 1 family. In terms of assembly, interacts with protein ORF7; this interaction localizes protein ORF53 to the host trans-Golgi network (TGN).

The protein resides in the virion. It localises to the virion tegument. It is found in the host cytoplasm. The protein localises to the host Golgi apparatus. In terms of biological role, plays a critical role in cytoplasmic virus egress. Participates in the final step of tegumentation and envelope acquisition within the host cytoplasm. This is Cytoplasmic envelopment protein 1 (ORF53) from Varicella-zoster virus (strain Dumas) (HHV-3).